Reading from the N-terminus, the 201-residue chain is Xanthine phosphoribosyltransferase (201 aa).

2 residues coordinate xanthine: L20 and N27. 129 to 133 (ANGQA) contributes to the 5-phospho-alpha-D-ribose 1-diphosphate binding site. K157 is a binding site for xanthine.

Belongs to the purine/pyrimidine phosphoribosyltransferase family. Xpt subfamily. In terms of assembly, homodimer.

It is found in the cytoplasm. The enzyme catalyses XMP + diphosphate = xanthine + 5-phospho-alpha-D-ribose 1-diphosphate. The protein operates within purine metabolism; XMP biosynthesis via salvage pathway; XMP from xanthine: step 1/1. Its function is as follows. Converts the preformed base xanthine, a product of nucleic acid breakdown, to xanthosine 5'-monophosphate (XMP), so it can be reused for RNA or DNA synthesis. The polypeptide is Xanthine phosphoribosyltransferase (Shouchella clausii (strain KSM-K16) (Alkalihalobacillus clausii)).